Here is a 241-residue protein sequence, read N- to C-terminus: Pyridoxal phosphate phosphatase PHOSPHO2 (241 aa).

Asp8 functions as the Nucleophile in the catalytic mechanism. Mg(2+)-binding residues include Asp8 and Asp10. The active-site Proton donor is Asp10. Substrate-binding residues include Asp19 and Asp99. Asp179 lines the Mg(2+) pocket.

The protein belongs to the HAD-like hydrolase superfamily. PHOSPHO family. Mg(2+) serves as cofactor.

It carries out the reaction pyridoxal 5'-phosphate + H2O = pyridoxal + phosphate. Its function is as follows. Phosphatase that has high activity toward pyridoxal 5'-phosphate (PLP). Also active at much lower level toward pyrophosphate, phosphoethanolamine (PEA), phosphocholine (PCho), phospho-l-tyrosine, fructose-6-phosphate, p-nitrophenyl phosphate, and h-glycerophosphate. In Mus musculus (Mouse), this protein is Pyridoxal phosphate phosphatase PHOSPHO2 (Phospho2).